Here is an 89-residue protein sequence, read N- to C-terminus: Small ribosomal subunit protein bS16 (89 aa).

The protein belongs to the bacterial ribosomal protein bS16 family.

The protein is Small ribosomal subunit protein bS16 of Geobacillus stearothermophilus (Bacillus stearothermophilus).